Here is a 409-residue protein sequence, read N- to C-terminus: All trans-polyprenyl-diphosphate synthase PDSS1 (409 aa).

Isopentenyl diphosphate contacts are provided by K128, R131, and H167. Mg(2+)-binding residues include D174 and D178. Residue R184 coordinates isopentenyl diphosphate.

This sequence belongs to the FPP/GGPP synthase family. In terms of assembly, heterotetramer composed of 2 PDSS1/DPS1 and 2 PDSS2/DLP1 subunits. The cofactor is Mg(2+).

Its subcellular location is the mitochondrion. It carries out the reaction 7 isopentenyl diphosphate + (2E,6E)-farnesyl diphosphate = all-trans-decaprenyl diphosphate + 7 diphosphate. It catalyses the reaction 6 isopentenyl diphosphate + (2E,6E)-farnesyl diphosphate = all-trans-nonaprenyl diphosphate + 6 diphosphate. It participates in cofactor biosynthesis; ubiquinone biosynthesis. Functionally, heterotetrameric enzyme that catalyzes the condensation of farnesyl diphosphate (FPP), which acts as a primer, and isopentenyl diphosphate (IPP) to produce prenyl diphosphates of varying chain lengths and participates in the determination of the side chain of ubiquinone. Supplies nona and decaprenyl diphosphate, the precursors for the side chain of the isoprenoid quinones ubiquinone-9 (Q9)and ubiquinone-10 (Q10) respectively. The enzyme adds isopentenyl diphosphate molecules sequentially to farnesyl diphosphate with trans stereochemistry. The chain is All trans-polyprenyl-diphosphate synthase PDSS1 from Mus musculus (Mouse).